The following is a 61-amino-acid chain: Sperm protamine P1 (61 aa).

The segment at 1 to 61 is disordered; that stretch reads MARFRRSRSR…RSSRRSRRRN (61 aa).

It belongs to the protamine P1 family. As to expression, testis.

Its subcellular location is the nucleus. The protein resides in the chromosome. In terms of biological role, protamines substitute for histones in the chromatin of sperm during the haploid phase of spermatogenesis. They compact sperm DNA into a highly condensed, stable and inactive complex. The sequence is that of Sperm protamine P1 (PRM1) from Ornithorhynchus anatinus (Duckbill platypus).